A 460-amino-acid polypeptide reads, in one-letter code: Cysteine--tRNA ligase (460 aa).

Position 28 (cysteine 28) interacts with Zn(2+). Residues methionine 30–histidine 40 carry the 'HIGH' region motif. Cysteine 209, histidine 234, and glutamate 238 together coordinate Zn(2+). Positions lysine 266–serine 270 match the 'KMSKS' region motif. Lysine 269 is a binding site for ATP.

It belongs to the class-I aminoacyl-tRNA synthetase family. In terms of assembly, monomer. It depends on Zn(2+) as a cofactor.

It is found in the cytoplasm. The catalysed reaction is tRNA(Cys) + L-cysteine + ATP = L-cysteinyl-tRNA(Cys) + AMP + diphosphate. The protein is Cysteine--tRNA ligase of Pseudomonas syringae pv. tomato (strain ATCC BAA-871 / DC3000).